The chain runs to 616 residues: uncharacterized protein (616 aa).

This is an uncharacterized protein from Methanocaldococcus jannaschii (strain ATCC 43067 / DSM 2661 / JAL-1 / JCM 10045 / NBRC 100440) (Methanococcus jannaschii).